We begin with the raw amino-acid sequence, 385 residues long: MIQAPRIAIIAGEASGDHLGAGLIQQLRLHFATAEFIGIGGDMMRSAGCQTWFDTSELAVMGLTEVLRHLPRLLKIRREFCKRALAWHPDVLIGIDAPDFNLTVERWFKQRHIRTVHYVSPSIWAWREKRAAKIGASVDRVLCLFPMEPPIYARYGIDARFVGHPMADEIPYQTDRATARTALGLPLLSPVLAVLPGSRHSEISQLGNTFLEAAGQLSEHLPGLHVVIPAANTQCKPLLAEQLSRSTLPVMHSHLLDSSARTAMLAADVVLVASGTATLEAMLLKRPMVVAYKVAPLTYRIVKTLKLLKINRFALPNILAGEDLVPELIQKDCTAPALCAALLDCFKHPQKVTALQNRYLQLHTQLRRNASTRAAEAIAELLQQR.

Belongs to the LpxB family.

It catalyses the reaction a lipid X + a UDP-2-N,3-O-bis[(3R)-3-hydroxyacyl]-alpha-D-glucosamine = a lipid A disaccharide + UDP + H(+). It participates in bacterial outer membrane biogenesis; LPS lipid A biosynthesis. Condensation of UDP-2,3-diacylglucosamine and 2,3-diacylglucosamine-1-phosphate to form lipid A disaccharide, a precursor of lipid A, a phosphorylated glycolipid that anchors the lipopolysaccharide to the outer membrane of the cell. The protein is Lipid-A-disaccharide synthase of Xylella fastidiosa (strain M23).